The chain runs to 274 residues: 2,3,4,5-tetrahydropyridine-2,6-dicarboxylate N-succinyltransferase (274 aa).

The substrate site is built by arginine 104 and aspartate 141.

It belongs to the transferase hexapeptide repeat family. In terms of assembly, homotrimer.

It is found in the cytoplasm. The catalysed reaction is (S)-2,3,4,5-tetrahydrodipicolinate + succinyl-CoA + H2O = (S)-2-succinylamino-6-oxoheptanedioate + CoA. Its pathway is amino-acid biosynthesis; L-lysine biosynthesis via DAP pathway; LL-2,6-diaminopimelate from (S)-tetrahydrodipicolinate (succinylase route): step 1/3. The polypeptide is 2,3,4,5-tetrahydropyridine-2,6-dicarboxylate N-succinyltransferase (Photorhabdus laumondii subsp. laumondii (strain DSM 15139 / CIP 105565 / TT01) (Photorhabdus luminescens subsp. laumondii)).